We begin with the raw amino-acid sequence, 678 residues long: Putative cyclic nucleotide-gated ion channel 15 (678 aa).

The Cytoplasmic segment spans residues 1 to 81 (MGYGNSRSVR…RGQTIRRWNK (81 aa)). The helical transmembrane segment at 82-102 (IFLIACLVSLFVDPLFFFLPV) threads the bilayer. Over 103–115 (MRNEACITIGVRL) the chain is Extracellular. A helical membrane pass occupies residues 116–136 (EVVLTLIRSLADAFYIAQILI). At 137-170 (RFRTAYIAPPSRVFGRGELVIDSRKIAWRYLHKS) the chain is on the cytoplasmic side. A helical membrane pass occupies residues 171–191 (FWIHLVAALPLPQVLIWIIIP). Over 192 to 203 (NLRGSPMTNTKN) the chain is Extracellular. The chain crosses the membrane as a helical span at residues 204–224 (VLRFIIIFQYVPRMFLIFPLS). Over 225–245 (RQIIKATGVVTETAWAGAAYN) the chain is Cytoplasmic. The chain crosses the membrane as a helical span at residues 246–266 (LMLYMLASHVLGACWYLLAVE). Over 267 to 364 (RQEACWRHAC…GQNLATSTYA (98 aa)) the chain is Extracellular. A helical membrane pass occupies residues 365 to 385 (GEILFAIIIATLGLVLFALLI). Residues 386–678 (GNMQTYLQST…KPVEPDFSSE (293 aa)) are Cytoplasmic-facing. Residues 471–595 (LFDQ…TKQL) and E542 each bind a nucleoside 3',5'-cyclic phosphate. The interval 587–602 (FRRLHTKQLRHKFRFY) is calmodulin-binding. The IQ domain occupies 607–638 (RTWAACFIQAAWRRHRKRKYKTELRAKEEFHY). Over residues 656–668 (RSGSDSGMMSSIQ) the composition is skewed to polar residues. Positions 656–678 (RSGSDSGMMSSIQKPVEPDFSSE) are disordered.

This sequence belongs to the cyclic nucleotide-gated cation channel (TC 1.A.1.5) family. Homotetramer or heterotetramer.

It localises to the cell membrane. Its function is as follows. Putative cyclic nucleotide-gated ion channel. In Arabidopsis thaliana (Mouse-ear cress), this protein is Putative cyclic nucleotide-gated ion channel 15 (CNGC15).